We begin with the raw amino-acid sequence, 884 residues long: Alanine--tRNA ligase (884 aa).

Residues H574, H578, C675, and H679 each contribute to the Zn(2+) site.

This sequence belongs to the class-II aminoacyl-tRNA synthetase family. The cofactor is Zn(2+).

It is found in the cytoplasm. It catalyses the reaction tRNA(Ala) + L-alanine + ATP = L-alanyl-tRNA(Ala) + AMP + diphosphate. Functionally, catalyzes the attachment of alanine to tRNA(Ala) in a two-step reaction: alanine is first activated by ATP to form Ala-AMP and then transferred to the acceptor end of tRNA(Ala). Also edits incorrectly charged Ser-tRNA(Ala) and Gly-tRNA(Ala) via its editing domain. This is Alanine--tRNA ligase from Ralstonia nicotianae (strain ATCC BAA-1114 / GMI1000) (Ralstonia solanacearum).